Consider the following 305-residue polypeptide: ATP synthase gamma chain (305 aa).

This sequence belongs to the ATPase gamma chain family. F-type ATPases have 2 components, CF(1) - the catalytic core - and CF(0) - the membrane proton channel. CF(1) has five subunits: alpha(3), beta(3), gamma(1), delta(1), epsilon(1). CF(0) has three main subunits: a, b and c.

The protein resides in the cell membrane. In terms of biological role, produces ATP from ADP in the presence of a proton gradient across the membrane. The gamma chain is believed to be important in regulating ATPase activity and the flow of protons through the CF(0) complex. The sequence is that of ATP synthase gamma chain from Mycobacterium tuberculosis (strain ATCC 25177 / H37Ra).